Reading from the N-terminus, the 288-residue chain is Pteridine reductase 1 (288 aa).

17 to 40 (RLGRSIAEGLHAEGYAVCLHYHRS) serves as a coordination point for NADP(+). S175 contributes to the substrate binding site. The active-site Proton acceptor is Y194.

It belongs to the short-chain dehydrogenases/reductases (SDR) family. Homotetramer.

The catalysed reaction is (6R)-L-erythro-5,6,7,8-tetrahydrobiopterin + 2 NADP(+) = L-erythro-biopterin + 2 NADPH + 2 H(+). It participates in cofactor biosynthesis; tetrahydrobiopterin biosynthesis; tetrahydrobiopterin from biopterin: step 1/1. Functionally, exhibits a NADPH-dependent biopterin reductase activity. Has good activity with folate and significant activity with dihydrofolate and dihydrobiopterin, but not with quinonoid dihydrobiopterin. Confers resistance to methotrexate (MTX). The sequence is that of Pteridine reductase 1 (PTR1) from Leishmania major.